Here is a 283-residue protein sequence, read N- to C-terminus: Pantothenate synthetase (283 aa).

Residue 34 to 41 (MGALHDGH) participates in ATP binding. The active-site Proton donor is the histidine 41. Residue glutamine 65 coordinates (R)-pantoate. Glutamine 65 serves as a coordination point for beta-alanine. 152-155 (GEKD) is a binding site for ATP. A (R)-pantoate-binding site is contributed by glutamine 158. ATP contacts are provided by residues valine 181 and 189–192 (MSSR).

This sequence belongs to the pantothenate synthetase family. In terms of assembly, homodimer.

Its subcellular location is the cytoplasm. It catalyses the reaction (R)-pantoate + beta-alanine + ATP = (R)-pantothenate + AMP + diphosphate + H(+). It functions in the pathway cofactor biosynthesis; (R)-pantothenate biosynthesis; (R)-pantothenate from (R)-pantoate and beta-alanine: step 1/1. Its function is as follows. Catalyzes the condensation of pantoate with beta-alanine in an ATP-dependent reaction via a pantoyl-adenylate intermediate. This Rhodopseudomonas palustris (strain BisB18) protein is Pantothenate synthetase.